The chain runs to 223 residues: Putative UPF0607 protein LOC392364 (223 aa).

Residues 110-138 (KMEVRAEEPKEATEVKDQVETQEQEDNKR) show a composition bias toward basic and acidic residues. The interval 110-223 (KMEVRAEEPK…GRTPPARQHG (114 aa)) is disordered. Polar residues-rich tracts occupy residues 145–163 (EAAS…TSPR) and 174–186 (QLKS…QTDK).

This sequence belongs to the UPF0607 family.

The protein is Putative UPF0607 protein LOC392364 of Homo sapiens (Human).